Here is a 457-residue protein sequence, read N- to C-terminus: Bifunctional F420 biosynthesis protein FbiB (457 aa).

Residues 1–253 (MTSSDSHRSA…NGPDDLFWLG (253 aa)) are coenzyme F420:L-glutamate ligase. GTP-binding positions include 29–32 (LPEF), Ser59, and Lys64. An a divalent metal cation-binding site is contributed by Asp118. Asn121 is a binding site for GTP. Asp159 and Thr160 together coordinate a divalent metal cation. Residues 254-457 (TTEALELGRQ…VRVADLLLRK (204 aa)) form a dehydro-coenzyme F420-0 reductase region. Residues 269–273 (RRSVR) and Ala297 contribute to the FMN site. Residue Asp329 participates in coenzyme F420-(gamma-Glu)n binding. FMN is bound by residues Gly408 and Arg445.

It in the N-terminal section; belongs to the CofE family. Mg(2+) is required as a cofactor. The cofactor is Mn(2+). It depends on K(+) as a cofactor.

The enzyme catalyses oxidized coenzyme F420-0 + GTP + L-glutamate = oxidized coenzyme F420-1 + GDP + phosphate + H(+). The catalysed reaction is oxidized coenzyme F420-1 + GTP + L-glutamate = oxidized coenzyme F420-2 + GDP + phosphate + H(+). It catalyses the reaction oxidized coenzyme F420-(gamma-L-Glu)(n) + GTP + L-glutamate = oxidized coenzyme F420-(gamma-L-Glu)(n+1) + GDP + phosphate + H(+). It carries out the reaction oxidized coenzyme F420-0 + FMN + H(+) = dehydro coenzyme F420-0 + FMNH2. Its pathway is cofactor biosynthesis; coenzyme F420 biosynthesis. Functionally, bifunctional enzyme that catalyzes the GTP-dependent successive addition of multiple gamma-linked L-glutamates to the L-lactyl phosphodiester of 7,8-didemethyl-8-hydroxy-5-deazariboflavin (F420-0) to form polyglutamated F420 derivatives, and the FMNH2-dependent reduction of dehydro-F420-0 to form F420-0. The sequence is that of Bifunctional F420 biosynthesis protein FbiB from Mycobacterium leprae (strain TN).